The following is a 403-amino-acid chain: Phosphopentomutase (403 aa).

Positions 13, 298, 303, 339, 340, and 351 each coordinate Mn(2+).

It belongs to the phosphopentomutase family. Mn(2+) serves as cofactor.

It localises to the cytoplasm. The enzyme catalyses 2-deoxy-alpha-D-ribose 1-phosphate = 2-deoxy-D-ribose 5-phosphate. It catalyses the reaction alpha-D-ribose 1-phosphate = D-ribose 5-phosphate. The protein operates within carbohydrate degradation; 2-deoxy-D-ribose 1-phosphate degradation; D-glyceraldehyde 3-phosphate and acetaldehyde from 2-deoxy-alpha-D-ribose 1-phosphate: step 1/2. Its function is as follows. Isomerase that catalyzes the conversion of deoxy-ribose 1-phosphate (dRib-1-P) and ribose 1-phosphate (Rib-1-P) to deoxy-ribose 5-phosphate (dRib-5-P) and ribose 5-phosphate (Rib-5-P), respectively. This chain is Phosphopentomutase, found in Streptococcus thermophilus (strain ATCC BAA-250 / LMG 18311).